Consider the following 456-residue polypeptide: Dothistromin biosynthesis regulatory protein aflJ (456 aa).

Positions 74–143 (LARENQLLAC…PKPGYVAHSG (70 aa)) constitute an HTH iclR-type domain. The H-T-H motif DNA-binding region spans 104–123 (YSDVADLACVPVDQLRRIAR). Residues 290-300 (KLHNGLSTPPE) show a composition bias toward polar residues. The disordered stretch occupies residues 290–314 (KLHNGLSTPPESDTGPAARAAKASE).

Its subcellular location is the nucleus. Transcription coactivator involved in regulation of the dothistromin biosynthesis gene cluster with aflR. The protein is Dothistromin biosynthesis regulatory protein aflJ of Dothistroma septosporum (strain NZE10 / CBS 128990) (Red band needle blight fungus).